A 146-amino-acid polypeptide reads, in one-letter code: Large ribosomal subunit protein uL11 (146 aa).

This sequence belongs to the universal ribosomal protein uL11 family. Part of the ribosomal stalk of the 50S ribosomal subunit. Interacts with L10 and the large rRNA to form the base of the stalk. L10 forms an elongated spine to which L12 dimers bind in a sequential fashion forming a multimeric L10(L12)X complex. One or more lysine residues are methylated.

Functionally, forms part of the ribosomal stalk which helps the ribosome interact with GTP-bound translation factors. The chain is Large ribosomal subunit protein uL11 from Buchnera aphidicola subsp. Baizongia pistaciae (strain Bp).